Consider the following 90-residue polypeptide: Probable Fe(2+)-trafficking protein (90 aa).

It belongs to the Fe(2+)-trafficking protein family. As to quaternary structure, monomer.

In terms of biological role, could be a mediator in iron transactions between iron acquisition and iron-requiring processes, such as synthesis and/or repair of Fe-S clusters in biosynthetic enzymes. The protein is Probable Fe(2+)-trafficking protein of Pectobacterium atrosepticum (strain SCRI 1043 / ATCC BAA-672) (Erwinia carotovora subsp. atroseptica).